The chain runs to 725 residues: RNA-directed RNA polymerase (725 aa).

The RdRp catalytic domain occupies 424-544 (PVGIGMDASR…VVERSDEKKV (121 aa)).

The protein belongs to the tombusviridae RNA polymerase family.

The catalysed reaction is RNA(n) + a ribonucleoside 5'-triphosphate = RNA(n+1) + diphosphate. In terms of biological role, RNA-dependent RNA polymerase that plays an essential role in the virus replication. The protein is RNA-directed RNA polymerase of Chenopodium amaranticolor (Quinoa).